The chain runs to 75 residues: uncharacterized protein (75 aa).

The signal sequence occupies residues methionine 1–alanine 25. Residues tyrosine 55 to isoleucine 75 form a helical membrane-spanning segment.

The protein localises to the host endoplasmic reticulum membrane. Functionally, plays a role in the down-regulation of the host NKG2D ligand MICA by targeting ER-resident MICA to proteasomal degradation prior to the GPI-anchoring step. In turn, MICA reduction diminishes NK-cell killing of HCMV-infected cells. This is an uncharacterized protein from Homo sapiens (Human).